Reading from the N-terminus, the 224-residue chain is Phosphoribosylformylglycinamidine synthase subunit PurQ (224 aa).

The Glutamine amidotransferase type-1 domain occupies 4-224; it reads RIGIITFPGT…YSVLDGVLAG (221 aa). Cysteine 87 serves as the catalytic Nucleophile. Catalysis depends on residues histidine 195 and glutamate 197.

As to quaternary structure, part of the FGAM synthase complex composed of 1 PurL, 1 PurQ and 2 PurS subunits.

Its subcellular location is the cytoplasm. It catalyses the reaction N(2)-formyl-N(1)-(5-phospho-beta-D-ribosyl)glycinamide + L-glutamine + ATP + H2O = 2-formamido-N(1)-(5-O-phospho-beta-D-ribosyl)acetamidine + L-glutamate + ADP + phosphate + H(+). The enzyme catalyses L-glutamine + H2O = L-glutamate + NH4(+). Its pathway is purine metabolism; IMP biosynthesis via de novo pathway; 5-amino-1-(5-phospho-D-ribosyl)imidazole from N(2)-formyl-N(1)-(5-phospho-D-ribosyl)glycinamide: step 1/2. Functionally, part of the phosphoribosylformylglycinamidine synthase complex involved in the purines biosynthetic pathway. Catalyzes the ATP-dependent conversion of formylglycinamide ribonucleotide (FGAR) and glutamine to yield formylglycinamidine ribonucleotide (FGAM) and glutamate. The FGAM synthase complex is composed of three subunits. PurQ produces an ammonia molecule by converting glutamine to glutamate. PurL transfers the ammonia molecule to FGAR to form FGAM in an ATP-dependent manner. PurS interacts with PurQ and PurL and is thought to assist in the transfer of the ammonia molecule from PurQ to PurL. The protein is Phosphoribosylformylglycinamidine synthase subunit PurQ of Mycolicibacterium paratuberculosis (strain ATCC BAA-968 / K-10) (Mycobacterium paratuberculosis).